A 1221-amino-acid polypeptide reads, in one-letter code: Putative DNA-directed RNA polymerase II subunit RPB2 homolog (1221 aa).

2 stretches are compositionally biased toward low complexity: residues 1 to 54 and 692 to 701; these read MSRG…SASS and PAPSSSPSDS. Disordered regions lie at residues 1–63 and 673–701; these read MSRG…PMSE and RGSG…PSDS. D823 is a Mg(2+) binding site. Residues C1174, C1177, C1187, and C1190 each coordinate Zn(2+). The C4-type zinc finger occupies 1174-1190; that stretch reads CKECGRISDHFEYCRMC.

This sequence belongs to the RNA polymerase beta chain family.

It carries out the reaction RNA(n) + a ribonucleoside 5'-triphosphate = RNA(n+1) + diphosphate. In terms of biological role, component of the DNA-dependent RNA polymerase that catalyzes the transcription of DNA into RNA using the four ribonucleoside triphosphates as substrates. Second largest component of RNA polymerase II which synthesizes mRNA precursors and many functional non-coding RNAs. Proposed to contribute to the polymerase catalytic activity and forms the polymerase active center together with the largest subunit. This Dryophytes versicolor (chameleon treefrog) protein is Putative DNA-directed RNA polymerase II subunit RPB2 homolog.